A 489-amino-acid polypeptide reads, in one-letter code: MYSFPNSFRFGWSQAGFQSEMGTPGSEDPNTDWYKWVHDPENMAAGLVSGDLPENGPGYWGNYKTFHDNAQKMGLKIARLNVEWSRIFPNPLPRPQNFDESKQDVTEVEINENELKRLDEYANKDALNHYREIFKDLKSRGLYFILNMYHWPLPLWLHDPIRVRRGDFTGPSGWLSTRTVYEFARFSAYIAWKFDDLVDEYSTMNEPNVVGGLGYVGVKSGFPPGYLSFELSRRAMYNIIQAHARAYDGIKSVSKKPVGIIYANSSFQPLTDKDMEAVEMAENDNRWWFFDAIIRGEITRGNEKIVRDDLKGRLDWIGVNYYTRTVVKRTEKGYVSLGGYGHGCERNSVSLAGLPTSDFGWEFFPEGLYDVLTKYWNRYHLYMYVTENGIADDADYQRPYYLVSHVYQVHRAINSGADVRGYLHWSLADNYEWASGFSMRFGLLKVDYNTKRLYWRPSALVYREIATNGAITDEIEHLNSVPPVKPLRH.

Lys-116 carries the N6-methyllysine; partial modification. Lys-135 carries the N6-methyllysine modification. Catalysis depends on Glu-206, which acts as the Proton donor. N6-methyllysine; partial is present on residues Lys-273 and Lys-311. N6-methyllysine is present on Lys-332. Glu-387 acts as the Nucleophile in catalysis.

As to quaternary structure, homotetramer.

It carries out the reaction Hydrolysis of terminal non-reducing beta-D-galactose residues in beta-D-galactosides.. This is Beta-galactosidase (lacS) from Saccharolobus solfataricus (strain ATCC 35092 / DSM 1617 / JCM 11322 / P2) (Sulfolobus solfataricus).